The primary structure comprises 121 residues: Large ribosomal subunit protein bL20 (121 aa).

The protein belongs to the bacterial ribosomal protein bL20 family.

In terms of biological role, binds directly to 23S ribosomal RNA and is necessary for the in vitro assembly process of the 50S ribosomal subunit. It is not involved in the protein synthesizing functions of that subunit. The polypeptide is Large ribosomal subunit protein bL20 (Wolbachia sp. subsp. Drosophila simulans (strain wRi)).